Consider the following 216-residue polypeptide: Invasion protein InvF (216 aa).

An HTH araC/xylS-type domain is found at 112-210 (YWLVGYLLAQ…GVSPRKLSNI (99 aa)). 2 DNA-binding regions (H-T-H motif) span residues 129-150 (RMLGEDYGVSYTHFRRLCSRAL) and 177-200 (ITQLAVNHGYSSPSHFSSEIKELI).

In terms of biological role, transcriptional regulator required for the expression of several genes encoding type III secretion system SPI1 effector proteins. The interaction with SicA is necessary for the activation of sigDE (sopB pipC), sicAsipBCDA, and sopE. The protein is Invasion protein InvF (invF) of Salmonella typhi.